Here is a 678-residue protein sequence, read N- to C-terminus: Probable 3',5'-cyclic phosphodiesterase pde-3 (678 aa).

3 disordered regions span residues 1–27 (MSPGPPAVGGVSPPVMVPGSAPPFQPT), 52–95 (AEMR…VLGG), and 223–250 (TVPAEPNKARSSSYWKTEASPSNNNEHE). Positions 7-19 (AVGGVSPPVMVPG) are enriched in low complexity. Composition is skewed to polar residues over residues 60–85 (TATSSPASSGVSIQQRRGSTTQNSGV) and 231–246 (ARSSSYWKTEASPSNN). The 352-residue stretch at 281 to 632 (RYDTRELDTD…RKWKEQIELE (352 aa)) folds into the PDEase domain. The active-site Proton donor is histidine 356. 4 residues coordinate a divalent metal cation: histidine 360, histidine 421, aspartate 422, and aspartate 531. Residues 654–678 (EEESASTSDSPDPRRDSPLDSDLSQ) form a disordered region.

It belongs to the cyclic nucleotide phosphodiesterase family. A divalent metal cation is required as a cofactor.

It catalyses the reaction a nucleoside 3',5'-cyclic phosphate + H2O = a nucleoside 5'-phosphate + H(+). This Caenorhabditis elegans protein is Probable 3',5'-cyclic phosphodiesterase pde-3 (pde-3).